Reading from the N-terminus, the 644-residue chain is MAEAAGEAGASERDPDAVRARRRLRVLSGHLLGRPQEAPSTNECKARRAASAAGASPAASPAAPESGTIPKKRQELMKWNGWGYNDSKFLLNKKGQVELTGKRYPLSGLALPTLKDWIQNTLGVNLEHKTTSKPSINPSEAPPSIVNEDFLQELKEAHISYSQDADDRVFRAHGHCLHEIFLLREGMFERIPDIVVWPTCHDDVVKIVNLACKYNLCIIPIGGGTSVSYGLMCPADETRTIISLDTSQMNRILWVDENNLTAHVEAGITGQDLERQLKESGYCTGHEPDSLEFSIVGGWISTRASGMKKNVYGNIEDLVVHMKMVTPRGVIEKSSQGPRMSTGPDIHHFIMGSEGTLGVITEATIKIRPTPEYQKYGSVAFPNFEQGVACLREIAKQRCAPASIRLMDNQQFQFGHALKPQVSSIFTSFLDGFKKFYITKFKGFDPNQISVATLLFEGDREKVLQHEKQVYDIAAKFGGLAAGEDNGQRGYLLTYVIAYMRDLGLEYYVVGESFETSAPWDRVIDLCRNVKERIRRECKERGVQFAPLSTCRVTQTYDAGACIYFYFAFNYRGISDPLTVFEQTEAAARDEILANGGSLSHHHGVGKLRKQWLKESISDVGFGMLKSVKDYVDPSNIFGNRNLL.

A peroxisome-targeting transit peptide spans 1 to 44 (MAEAAGEAGASERDPDAVRARRRLRVLSGHLLGRPQEAPSTNEC). Residues 1-70 (MAEAAGEAGA…PAAPESGTIP (70 aa)) form a disordered region. A compositionally biased stretch (basic and acidic residues) spans 10–19 (ASERDPDAVR). The segment covering 49-64 (AASAAGASPAASPAAP) has biased composition (low complexity). Phosphoserine occurs at positions 51 and 56. An N6-acetyllysine modification is found at lysine 88. The FAD-binding PCMH-type domain maps to 188–370 (FERIPDIVVW…TEATIKIRPT (183 aa)). Residues 220–226 (PIGGGTS), 289–295 (DSLEFSI), and 302–305 (TRAS) contribute to the FAD site. N6-acetyllysine is present on lysine 333. 354–360 (EGTLGVI) contacts FAD. Arginine 501 lines the substrate pocket. The Proton donor/acceptor role is filled by tyrosine 564. 2 important for enzyme activity regions span residues 601–603 (HHH) and 640–644 (NRNLL).

The protein belongs to the FAD-binding oxidoreductase/transferase type 4 family. In terms of assembly, homodimer. FAD is required as a cofactor.

The protein localises to the peroxisome membrane. The protein resides in the peroxisome. The catalysed reaction is a long chain fatty alcohol + a 1-acylglycerone 3-phosphate = a 1-O-alkylglycerone 3-phosphate + a long-chain fatty acid + H(+). It carries out the reaction hexadecan-1-ol + 1-hexadecanoylglycerone 3-phosphate = 1-O-hexadecylglycerone 3-phosphate + hexadecanoate + H(+). The enzyme catalyses 1-hexadecanoylglycerone 3-phosphate + a long-chain fatty acid = a 1-acylglycerone 3-phosphate + hexadecanoate. It participates in glycerolipid metabolism; ether lipid biosynthesis. Its activity is regulated as follows. Inhibited by divalent cation Mg(2+). In terms of biological role, catalyzes the exchange of the acyl chain in acyl-dihydroxyacetonephosphate (acyl-DHAP) for a long chain fatty alcohol, yielding the first ether linked intermediate, i.e. alkyl-dihydroxyacetonephosphate (alkyl-DHAP), in the pathway of ether lipid biosynthesis. In Rattus norvegicus (Rat), this protein is Alkyldihydroxyacetonephosphate synthase, peroxisomal (Agps).